The sequence spans 156 residues: Large ribosomal subunit protein uL15 (156 aa).

A compositionally biased stretch (basic and acidic residues) spans 1–11 (MKLNDLRDKPG). Positions 1–40 (MKLNDLRDKPGSVKARKRVGRGIGSGTGKTGGRGVKGQKS) are disordered. The span at 21–35 (RGIGSGTGKTGGRGV) shows a compositional bias: gly residues.

It belongs to the universal ribosomal protein uL15 family. In terms of assembly, part of the 50S ribosomal subunit.

In terms of biological role, binds to the 23S rRNA. This chain is Large ribosomal subunit protein uL15, found in Brucella anthropi (strain ATCC 49188 / DSM 6882 / CCUG 24695 / JCM 21032 / LMG 3331 / NBRC 15819 / NCTC 12168 / Alc 37) (Ochrobactrum anthropi).